Consider the following 630-residue polypeptide: DNA mismatch repair protein MutL (630 aa).

Polar residues predominate over residues 398-408 (TQTNAFGSMAT). The disordered stretch occupies residues 398-425 (TQTNAFGSMATSRDSSRGSYSASESRQR).

Belongs to the DNA mismatch repair MutL/HexB family.

Functionally, this protein is involved in the repair of mismatches in DNA. It is required for dam-dependent methyl-directed DNA mismatch repair. May act as a 'molecular matchmaker', a protein that promotes the formation of a stable complex between two or more DNA-binding proteins in an ATP-dependent manner without itself being part of a final effector complex. This is DNA mismatch repair protein MutL from Shewanella baltica (strain OS185).